Consider the following 212-residue polypeptide: uncharacterized protein (212 aa).

This sequence belongs to the flavoredoxin family. It depends on FMN as a cofactor.

This is an uncharacterized protein from Methanothermobacter thermautotrophicus (strain ATCC 29096 / DSM 1053 / JCM 10044 / NBRC 100330 / Delta H) (Methanobacterium thermoautotrophicum).